A 154-amino-acid chain; its full sequence is MPVDPEKLAKLQKAAAKKVGGSRVKAKKVVKTEQDDTKLIEALGKLKATKIENVEEANFFREDGKVLHFNRVGVQGAAASNTFAFTGYPQEKNVTQLIPQILPQLGAENLEILRQLAEQLQAGKAPTELNAGAPAGGDEGIPDLIDGEKFDEVE.

In terms of domain architecture, NAC-A/B spans 33–98 (EQDDTKLIEA…PQEKNVTQLI (66 aa)). The disordered stretch occupies residues 125-154 (APTELNAGAPAGGDEGIPDLIDGEKFDEVE).

Belongs to the NAC-beta family. Part of the nascent polypeptide-associated complex (NAC), consisting of EGD2 and EGD1. NAC associates with ribosomes via EGD1.

Its subcellular location is the cytoplasm. It localises to the nucleus. Functionally, component of the nascent polypeptide-associated complex (NAC), a dynamic component of the ribosomal exit tunnel, protecting the emerging polypeptides from interaction with other cytoplasmic proteins to ensure appropriate nascent protein targeting. The NAC complex also promotes mitochondrial protein import by enhancing productive ribosome interactions with the outer mitochondrial membrane and blocks the inappropriate interaction of ribosomes translating non-secretory nascent polypeptides with translocation sites in the membrane of the endoplasmic reticulum. EGD1 may act as a transcription factor that exert a negative effect on the expression of several genes that are transcribed by RNA polymerase II. This Scheffersomyces stipitis (strain ATCC 58785 / CBS 6054 / NBRC 10063 / NRRL Y-11545) (Yeast) protein is Nascent polypeptide-associated complex subunit beta (EGD1).